A 167-amino-acid polypeptide reads, in one-letter code: S-ribosylhomocysteine lyase (167 aa).

The Fe cation site is built by His-54, His-58, and Cys-128.

This sequence belongs to the LuxS family. As to quaternary structure, homodimer. The cofactor is Fe cation.

It carries out the reaction S-(5-deoxy-D-ribos-5-yl)-L-homocysteine = (S)-4,5-dihydroxypentane-2,3-dione + L-homocysteine. Functionally, involved in the synthesis of autoinducer 2 (AI-2) which is secreted by bacteria and is used to communicate both the cell density and the metabolic potential of the environment. The regulation of gene expression in response to changes in cell density is called quorum sensing. Catalyzes the transformation of S-ribosylhomocysteine (RHC) to homocysteine (HC) and 4,5-dihydroxy-2,3-pentadione (DPD). The chain is S-ribosylhomocysteine lyase from Haemophilus influenzae (strain PittEE).